The primary structure comprises 86 residues: MKTLCIFLVLVVAVAAFPPFISQHDCPPNKEFGSYGDCPPSCLKNPPNFCTLKLNYGCKCKEGYVLTRYQDYESDCIKPEECPDDS.

A signal peptide spans 1-16 (MKTLCIFLVLVVAVAA). Disulfide bonds link Cys26–Cys58, Cys38–Cys50, Cys42–Cys82, and Cys60–Cys76. The TIL domain occupies 26-82 (CPPNKEFGSYGDCPPSCLKNPPNFCTLKLNYGCKCKEGYVLTRYQDYESDCIKPEEC).

The protein belongs to the serine protease inhibitor-like (TIL domain-containing) family. In terms of tissue distribution, only expressed in fat body.

Its subcellular location is the secreted. In terms of biological role, serine protease inhibitor that inhibits chymotrypsin (IC(50)=34.13 nM, Ki=49.85 nM), microbial serine proteases (subtilisin A (IC(50)=21.31 nM, Ki=20.51 nM) and proteinase K (IC(50)=52.56 nM, Ki=65.42 nM)), as well as human neutrophil elastase (IC(50)=11.54 nM, Ki=8.74 nM), and porcine pancreatic elastase (IC(50)=19.07 nM, Ki=11.32 nM). The sequence is that of Chymotrypsin inhibitor from Araneus ventricosus (Orbweaver spider).